Consider the following 82-residue polypeptide: Small ribosomal subunit protein bS16 (82 aa).

Belongs to the bacterial ribosomal protein bS16 family.

In Rippkaea orientalis (strain PCC 8801 / RF-1) (Cyanothece sp. (strain PCC 8801)), this protein is Small ribosomal subunit protein bS16.